The chain runs to 986 residues: Isoleucine--tRNA ligase (986 aa).

A 'KMSKS' region motif is present at residues 534 to 538; sequence EMHKS. Lysine 537 lines the ATP pocket.

It belongs to the class-I aminoacyl-tRNA synthetase family. IleS type 2 subfamily. In terms of assembly, monomer. Requires Zn(2+) as cofactor.

It is found in the cytoplasm. It catalyses the reaction tRNA(Ile) + L-isoleucine + ATP = L-isoleucyl-tRNA(Ile) + AMP + diphosphate. Its function is as follows. Catalyzes the attachment of isoleucine to tRNA(Ile). As IleRS can inadvertently accommodate and process structurally similar amino acids such as valine, to avoid such errors it has two additional distinct tRNA(Ile)-dependent editing activities. One activity is designated as 'pretransfer' editing and involves the hydrolysis of activated Val-AMP. The other activity is designated 'posttransfer' editing and involves deacylation of mischarged Val-tRNA(Ile). The polypeptide is Isoleucine--tRNA ligase (ileS) (Saccharolobus solfataricus (strain ATCC 35092 / DSM 1617 / JCM 11322 / P2) (Sulfolobus solfataricus)).